The chain runs to 166 residues: Small ribosomal subunit protein uS5 (166 aa).

The S5 DRBM domain maps to 10 to 73; sequence QIEKLISLNR…TSARKNLRFV (64 aa).

Belongs to the universal ribosomal protein uS5 family. In terms of assembly, part of the 30S ribosomal subunit. Contacts proteins S4 and S8.

With S4 and S12 plays an important role in translational accuracy. Its function is as follows. Located at the back of the 30S subunit body where it stabilizes the conformation of the head with respect to the body. In Borrelia garinii subsp. bavariensis (strain ATCC BAA-2496 / DSM 23469 / PBi) (Borreliella bavariensis), this protein is Small ribosomal subunit protein uS5.